Here is a 265-residue protein sequence, read N- to C-terminus: MTPQLLGFFDSGLGGLTVLRRVLERHGSVPCVYLGDTARVPYGNRQPDDIRRIAAEVVGWLRDQKVSTVVMACNTTNALARDVADGQAGAPVIGLIGAAAAMVETRRVGVLATPATVASSAYRASIEALHPGSMVIEQACPAFVPLIESGDMNSDDLRRAAQAYLEPLLAASVESIVLGCTHYPLLVPLLRQLLPESVQIIDPAIGVARQLDAVLRSPGPISAVPRPFSLESCRFCVTADPDGFAMRATPWLGQRPDVSLQLLPD.

Substrate is bound by residues D10–S11 and Y42–G43. C73 serves as the catalytic Proton donor/acceptor. N74 to T75 provides a ligand contact to substrate. Residue C180 is the Proton donor/acceptor of the active site. T181 to H182 lines the substrate pocket.

The protein belongs to the aspartate/glutamate racemases family.

The enzyme catalyses L-glutamate = D-glutamate. It functions in the pathway cell wall biogenesis; peptidoglycan biosynthesis. Provides the (R)-glutamate required for cell wall biosynthesis. This is Glutamate racemase from Synechococcus sp. (strain CC9605).